A 193-amino-acid polypeptide reads, in one-letter code: dCTP deaminase (193 aa).

Residues R110–R115, D128, V136–E138, Y171, K178, and Q182 each bind dCTP. Catalysis depends on E138, which acts as the Proton donor/acceptor. The tract at residues R169 to D193 is disordered.

This sequence belongs to the dCTP deaminase family. In terms of assembly, homotrimer.

It catalyses the reaction dCTP + H2O + H(+) = dUTP + NH4(+). It participates in pyrimidine metabolism; dUMP biosynthesis; dUMP from dCTP (dUTP route): step 1/2. Catalyzes the deamination of dCTP to dUTP. This is dCTP deaminase from Sodalis glossinidius (strain morsitans).